We begin with the raw amino-acid sequence, 238 residues long: 2-C-methyl-D-erythritol 4-phosphate cytidylyltransferase (238 aa).

This sequence belongs to the IspD/TarI cytidylyltransferase family. IspD subfamily.

The catalysed reaction is 2-C-methyl-D-erythritol 4-phosphate + CTP + H(+) = 4-CDP-2-C-methyl-D-erythritol + diphosphate. It participates in isoprenoid biosynthesis; isopentenyl diphosphate biosynthesis via DXP pathway; isopentenyl diphosphate from 1-deoxy-D-xylulose 5-phosphate: step 2/6. Catalyzes the formation of 4-diphosphocytidyl-2-C-methyl-D-erythritol from CTP and 2-C-methyl-D-erythritol 4-phosphate (MEP). The chain is 2-C-methyl-D-erythritol 4-phosphate cytidylyltransferase from Paraburkholderia phytofirmans (strain DSM 17436 / LMG 22146 / PsJN) (Burkholderia phytofirmans).